The following is a 299-amino-acid chain: Ribosomal protein L11 methyltransferase (299 aa).

Positions 150, 171, 193, and 234 each coordinate S-adenosyl-L-methionine.

It belongs to the methyltransferase superfamily. PrmA family.

The protein localises to the cytoplasm. The enzyme catalyses L-lysyl-[protein] + 3 S-adenosyl-L-methionine = N(6),N(6),N(6)-trimethyl-L-lysyl-[protein] + 3 S-adenosyl-L-homocysteine + 3 H(+). In terms of biological role, methylates ribosomal protein L11. This Dictyoglomus turgidum (strain DSM 6724 / Z-1310) protein is Ribosomal protein L11 methyltransferase.